The following is a 525-amino-acid chain: Lymphocyte activation gene 3 protein (525 aa).

The first 23 residues, 1–23 (MRQDLFLDLLLLQLLWEAPVVSS), serve as a signal peptide directing secretion. Over 24 to 442 (GPGKELSVVW…ISGDLKGGHL (419 aa)) the chain is Extracellular. The region spanning 37–163 (GAPVHLPCSL…FSCSLRLRVG (127 aa)) is the Ig-like V-type domain. The tract at residues 37-246 (GAPVHLPCSL…LTYRDGFNVS (210 aa)) is interaction with FGL1. Cysteine 44 and cysteine 156 are oxidised to a cystine. 3 Ig-like C2-type domains span residues 164-246 (QASM…FNVS), 258-341 (PVAP…AAVT), and 345-412 (ITVT…EGQK). Asparagine 184 carries an N-linked (GlcNAc...) asparagine glycan. The cysteines at positions 185 and 235 are disulfide-linked. 2 N-linked (GlcNAc...) asparagine glycosylation sites follow: asparagine 244 and asparagine 309. 2 cysteine pairs are disulfide-bonded: cysteine 276–cysteine 327 and cysteine 363–cysteine 405. Residues 422–442 (ESSSGAWSAKRISGDLKGGHL) form a connecting peptide region. Residues 443-463 (FLSLILGALALFLLVTGAFGF) form a helical membrane-spanning segment. Residues 464-525 (HLWRRQLLRR…PELEPESRQL (62 aa)) lie on the Cytoplasmic side of the membrane. The interval 486 to 525 (PVQSKIEELEREPETEMEPETEPDPEPQPEPELEPESRQL) is disordered. Positions 490–495 (KIEELE) match the KIEELE motif motif. The span at 490 to 499 (KIEELEREPE) shows a compositional bias: basic and acidic residues. Positions 493–522 (ELEREPETEMEPETEPDPEPQPEPELEPES) are 15 X 2 AA tandem repeats of E-X. Residues 500 to 519 (TEMEPETEPDPEPQPEPELE) show a composition bias toward acidic residues.

It belongs to the LAG3 family. Interacts with MHC class II (MHC-II); selectively recognizes stable complexes of peptide and MHC-II. Interacts with FGL1 (via the Fibrinogen C-terminal domain). Post-translationally, proteolytically cleaved by ADAM10 and ADAM17 within the connecting peptide region, leading to release of Secreted lymphocyte activation gene 3 protein (sLAG-3). ADAM10 mediates constitutive cleavage, but cleavage increases following T-cell activation, whereas shedding by ADAM17 is induced by TCR signaling in a PRKCQ-dependent manner.

Its subcellular location is the cell membrane. The protein localises to the secreted. Functionally, lymphocyte activation gene 3 protein: Inhibitory receptor on antigen activated T-cells. Delivers inhibitory signals upon binding to ligands, such as FGL1. FGL1 constitutes a major ligand of LAG3 and is responsible for LAG3 T-cell inhibitory function. Following TCR engagement, LAG3 associates with CD3-TCR in the immunological synapse and directly inhibits T-cell activation. May inhibit antigen-specific T-cell activation in synergy with PDCD1/PD-1, possibly by acting as a coreceptor for PDCD1/PD-1. Negatively regulates the proliferation, activation, effector function and homeostasis of both CD8(+) and CD4(+) T-cells. Also mediates immune tolerance: constitutively expressed on a subset of regulatory T-cells (Tregs) and contributes to their suppressive function. Also acts as a negative regulator of plasmacytoid dendritic cell (pDCs) activation. Binds MHC class II (MHC-II); the precise role of MHC-II-binding is however unclear. Its function is as follows. May function as a ligand for MHC class II (MHC-II) on antigen-presenting cells (APC), promoting APC activation/maturation and driving Th1 immune response. The sequence is that of Lymphocyte activation gene 3 protein (Lag3) from Rattus norvegicus (Rat).